The sequence spans 193 residues: Peptidyl-tRNA hydrolase (193 aa).

Position 16 (Tyr-16) interacts with tRNA. The Proton acceptor role is filled by His-21. Residues Phe-67, Asn-69, and Asn-115 each coordinate tRNA.

This sequence belongs to the PTH family. Monomer.

The protein localises to the cytoplasm. The catalysed reaction is an N-acyl-L-alpha-aminoacyl-tRNA + H2O = an N-acyl-L-amino acid + a tRNA + H(+). In terms of biological role, hydrolyzes ribosome-free peptidyl-tRNAs (with 1 or more amino acids incorporated), which drop off the ribosome during protein synthesis, or as a result of ribosome stalling. Catalyzes the release of premature peptidyl moieties from peptidyl-tRNA molecules trapped in stalled 50S ribosomal subunits, and thus maintains levels of free tRNAs and 50S ribosomes. The polypeptide is Peptidyl-tRNA hydrolase (Baumannia cicadellinicola subsp. Homalodisca coagulata).